The primary structure comprises 283 residues: MSNVETSARPFELCGFPVGLEHPLFLIAGPCVIETEQLALDTAGALKEITDGLGIPFIYKSSFDKANRSSHASYRGPGMEEGLRILAEVKRQIGVPVLTDVHEDTPLQEVASVVDVLQTPAFLCRQTNFIQNVANTGKPVNLKKGQFLAPWDMKHVAAKALATGNRHIMVCERGVSFGYNNLVSDMRSLSIMRETGCPVVYDATHSVQLPGGQGTASGGQREFVPALARAAVAVGISGLFMETHPDPDRALSDGPNSWPLDRMKALLELLSTLDRTVKASPLL.

The protein belongs to the KdsA family.

Its subcellular location is the cytoplasm. The enzyme catalyses D-arabinose 5-phosphate + phosphoenolpyruvate + H2O = 3-deoxy-alpha-D-manno-2-octulosonate-8-phosphate + phosphate. The protein operates within carbohydrate biosynthesis; 3-deoxy-D-manno-octulosonate biosynthesis; 3-deoxy-D-manno-octulosonate from D-ribulose 5-phosphate: step 2/3. It participates in bacterial outer membrane biogenesis; lipopolysaccharide biosynthesis. The polypeptide is 2-dehydro-3-deoxyphosphooctonate aldolase (Methylococcus capsulatus (strain ATCC 33009 / NCIMB 11132 / Bath)).